A 117-amino-acid chain; its full sequence is uncharacterized protein (117 aa).

This is an uncharacterized protein from Escherichia coli O157:H7.